The primary structure comprises 984 residues: Protein translocase subunit SecA (984 aa).

ATP is bound by residues Gln96, 114–118, and Asp595; that span reads GEGKT. Basic and acidic residues-rich tracts occupy residues 930–942 and 952–971; these read EHEEEKKHQRLLE and KSDKKPRPKTLKERLKEERL. The segment at 930-984 is disordered; that stretch reads EHEEEKKHQRLLEEAELQGVQGKSDKKPRPKTLKERLKEERLRKRKLKAKKKEQE. A compositionally biased stretch (basic residues) spans 972–984; the sequence is RKRKLKAKKKEQE.

Belongs to the SecA family. As to quaternary structure, monomer and homodimer. Part of the essential Sec protein translocation apparatus which comprises SecA, SecYEG and auxiliary proteins SecDF. Other proteins may also be involved.

It is found in the cell inner membrane. The protein resides in the cytoplasm. The catalysed reaction is ATP + H2O + cellular proteinSide 1 = ADP + phosphate + cellular proteinSide 2.. Its function is as follows. Part of the Sec protein translocase complex. Interacts with the SecYEG preprotein conducting channel. Has a central role in coupling the hydrolysis of ATP to the transfer of proteins into and across the cell membrane, serving as an ATP-driven molecular motor driving the stepwise translocation of polypeptide chains across the membrane. The chain is Protein translocase subunit SecA from Aquifex aeolicus (strain VF5).